The following is a 563-amino-acid chain: Cystathionine gamma-synthase-like protein ankD (563 aa).

Residues Met-1–Ala-37 are disordered. The span at Gln-10–Gln-24 shows a compositional bias: polar residues.

This sequence belongs to the trans-sulfuration enzymes family. MET7 subfamily. The cofactor is pyridoxal 5'-phosphate.

The catalysed reaction is cyclo(L-arginyl-(Z)-dehydro-3,4-dihydroxytyrosyl) + O-acetyl-L-homoserine = cyclo(L-arginyl-(Z)-dehydro-4-O-homoseryl-tyrosyl) + acetate + H(+). It functions in the pathway secondary metabolite biosynthesis. Cystathionine gamma-synthase-like protein; part of the ank cluster that mediates the biosynthesis of NK13650 C, a highly modified cyclo-arginine-tyrosine dipeptide. AnkD catalyzes the attachment of L-homoserine moiety using O-acetyl-L-homoserine as co-substrate. Within the pathway, the cyclodipeptide synthase ankA acts as the scaffold-generating enzyme and is responsible for formation of the cyclo-Arg-Tyr diketopiperazine (cRY) from L-Arg and L-Tyr. The ankA product cRY is desaturated by the cytochrome P450 monooxygenase ankB to yield a dehydro-cyclodipeptide intermediate. The FAD-dependent monooxygenase ankC then installs the m-OH, ankD catalyzes the attachment of L-homoserine, and ankE ligates citrate to the ankD product to yield NK13650 B. The O-methyltransferase ankF is responsible for methylation of the C-17 phenol group of NK13650 B to produce NK13650 D. Amidation of NK13650 D with L-Asp by ankG then leads to the production of NK13650 C, whereas amidation of NK13650 B produces NK13650 A. This chain is Cystathionine gamma-synthase-like protein ankD, found in Aspergillus thermomutatus (Neosartorya pseudofischeri).